Reading from the N-terminus, the 329-residue chain is Beta-ketoacyl-[acyl-carrier-protein] synthase III (329 aa).

Residues Cys114 and His254 contribute to the active site. Residues 255–259 (QANLR) form an ACP-binding region. Asn284 is a catalytic residue.

The protein belongs to the thiolase-like superfamily. FabH family. In terms of assembly, homodimer.

The protein localises to the cytoplasm. The enzyme catalyses malonyl-[ACP] + acetyl-CoA + H(+) = 3-oxobutanoyl-[ACP] + CO2 + CoA. Its pathway is lipid metabolism; fatty acid biosynthesis. Its function is as follows. Catalyzes the condensation reaction of fatty acid synthesis by the addition to an acyl acceptor of two carbons from malonyl-ACP. Catalyzes the first condensation reaction which initiates fatty acid synthesis and may therefore play a role in governing the total rate of fatty acid production. Possesses both acetoacetyl-ACP synthase and acetyl transacylase activities. Its substrate specificity determines the biosynthesis of branched-chain and/or straight-chain of fatty acids. The protein is Beta-ketoacyl-[acyl-carrier-protein] synthase III of Roseiflexus sp. (strain RS-1).